A 318-amino-acid chain; its full sequence is CRISPR-associated protein Cas7/Csa2 1 (318 aa).

The protein belongs to the CRISPR-associated protein Cas7/Cst2/DevR family. Subtype I-a/Apern subfamily. Part of the aCascade ribonucleoprotein complex, minimally composed of Csa2 and Cas5a, which binds crRNA. Other possible components of aCascade in strain P1 are Cas6b (SSO1437) and Csa5 (SSO1443), while SSO1399, Cas5b (SSO1400) and SSO1401 have sometimes been seen weakly associated. Csa2 is probably the major RNA-binding subunit. The Csa2-Cas5a-crRNA complex also binds target DNA homologous to crRNA, probably forming an R-loop. Purified aCascade forms a filament about 6 nm in width.

Functionally, CRISPR (clustered regularly interspaced short palindromic repeat) is an adaptive immune system that provides protection against mobile genetic elements (viruses, transposable elements and conjugative plasmids). CRISPR clusters contain spacers, sequences complementary to antecedent mobile elements, and target invading nucleic acids. CRISPR clusters are transcribed and processed into CRISPR RNA (crRNA). The sequence is that of CRISPR-associated protein Cas7/Csa2 1 (cas7a) from Saccharolobus solfataricus (strain ATCC 35092 / DSM 1617 / JCM 11322 / P2) (Sulfolobus solfataricus).